Here is a 168-residue protein sequence, read N- to C-terminus: Replicase polyprotein 1ab (168 aa).

In terms of domain architecture, Nidovirus-type SAM-dependent 2'-O-MTase spans 1-165 (PNTKSIDGEN…KLLNFGNHLV (165 aa)).

Functionally, the replicase polyprotein of coronaviruses is a multifunctional protein: it contains the activities necessary for the transcription of negative stranded RNA, leader RNA, subgenomic mRNAs and progeny virion RNA as well as proteinases responsible for the cleavage of the polyprotein into functional products. The protein is Replicase polyprotein 1ab (rep) of Canine coronavirus (strain Insavc-1) (CCoV).